Here is a 328-residue protein sequence, read N- to C-terminus: Mitochondrial GTPase 1 (328 aa).

The CP-type G domain occupies N23–P211. GTP is bound by residues N70–D73, N155–S160, and G207.

This sequence belongs to the TRAFAC class YlqF/YawG GTPase family. MTG1 subfamily.

It localises to the mitochondrion inner membrane. In terms of biological role, mitochondrial GTPase involved in assembly of the large ribosomal subunit. Plays a role in expression of the mitochondrial translational machinery. This is Mitochondrial GTPase 1 (mtg1) from Schizosaccharomyces pombe (strain 972 / ATCC 24843) (Fission yeast).